The chain runs to 142 residues: 3-hydroxyacyl-[acyl-carrier-protein] dehydratase FabZ (142 aa).

The active site involves histidine 48.

Belongs to the thioester dehydratase family. FabZ subfamily.

The protein resides in the cytoplasm. The catalysed reaction is a (3R)-hydroxyacyl-[ACP] = a (2E)-enoyl-[ACP] + H2O. In terms of biological role, involved in unsaturated fatty acids biosynthesis. Catalyzes the dehydration of short chain beta-hydroxyacyl-ACPs and long chain saturated and unsaturated beta-hydroxyacyl-ACPs. The sequence is that of 3-hydroxyacyl-[acyl-carrier-protein] dehydratase FabZ from Natranaerobius thermophilus (strain ATCC BAA-1301 / DSM 18059 / JW/NM-WN-LF).